The sequence spans 31 residues: MSDIN-like toxin proprotein 8 (31 aa).

The propeptide occupies 1-10 (MSDINTARLP). The cyclopeptide (Cys-Pro) cross-link spans 11–18 (CIGFLGIP). The propeptide occupies 19-31 (SVGDDIEMVLRHG).

The protein belongs to the MSDIN fungal toxin family. Processed by the macrocyclase-peptidase enzyme POPB to yield a toxic cyclic octapeptide. POPB first removes 10 residues from the N-terminus. Conformational trapping of the remaining peptide forces the enzyme to release this intermediate rather than proceed to macrocyclization. The enzyme rebinds the remaining peptide in a different conformation and catalyzes macrocyclization of the N-terminal 8 residues.

In terms of biological role, probable toxin that belongs to the MSDIN-like toxin family responsible for a large number of food poisoning cases and deaths. This is MSDIN-like toxin proprotein 8 from Amanita bisporigera (Destroying angel).